We begin with the raw amino-acid sequence, 287 residues long: Elongation factor Ts (287 aa).

Residues 80-83 (TDFL) are involved in Mg(2+) ion dislocation from EF-Tu.

It belongs to the EF-Ts family.

It localises to the cytoplasm. Functionally, associates with the EF-Tu.GDP complex and induces the exchange of GDP to GTP. It remains bound to the aminoacyl-tRNA.EF-Tu.GTP complex up to the GTP hydrolysis stage on the ribosome. In Pseudomonas entomophila (strain L48), this protein is Elongation factor Ts.